A 259-amino-acid polypeptide reads, in one-letter code: Bidirectional sugar transporter SWEET4 (259 aa).

Residues 1–10 (MVSPDTIRTA) lie on the Extracellular side of the membrane. The 85-residue stretch at 10–94 (AIGVVGNGTA…TYIALFLAFS (85 aa)) folds into the MtN3/slv 1 domain. Residues 11 to 31 (IGVVGNGTALVLFLSPVPTFI) traverse the membrane as a helical segment. Residues 32 to 44 (RIWKKGSVEQYSA) are Cytoplasmic-facing. The chain crosses the membrane as a helical span at residues 45-65 (VPYVATLLNCMMWVLYGLPAV). Over 66 to 77 (HPHSMLVITING) the chain is Extracellular. An N-linked (GlcNAc...) asparagine glycan is attached at N76. Residues 78 to 98 (TGMAIELTYIALFLAFSLGAV) traverse the membrane as a helical segment. Topologically, residues 99–101 (RRR) are cytoplasmic. The helical transmembrane segment at 102–122 (VLLLLAAEVAFVAAVAALVLN) threads the bilayer. Topologically, residues 123-131 (LAHTHERRS) are extracellular. A helical transmembrane segment spans residues 132–152 (MIVGILCVLFGTGMYAAPLSV). Residues 133–217 (IVGILCVLFG…ILYAIYYKST (85 aa)) enclose the MtN3/slv 2 domain. Over 153–165 (MKMVIQTKSVEYM) the chain is Cytoplasmic. A helical membrane pass occupies residues 166–186 (PLFLSLASLVNGICWTAYALI). The Extracellular segment spans residues 187–191 (RFDLY). A helical transmembrane segment spans residues 192-212 (ITIPNGLGVMFAVAQLILYAI). The Cytoplasmic segment spans residues 213 to 259 (YYKSTQQIIEARKRKEADHVAMTDVVVDSAKNNPSSGAAAAAANGRY).

This sequence belongs to the SWEET sugar transporter family. In terms of assembly, forms homooligomers and/or heterooligomers.

It localises to the cell membrane. Functionally, mediates both low-affinity uptake and efflux of sugar across the plasma membrane. The sequence is that of Bidirectional sugar transporter SWEET4 (SWEET4) from Oryza sativa subsp. indica (Rice).